Reading from the N-terminus, the 555-residue chain is Chaperonin GroEL (555 aa).

Residues 29-32 (TLGP), K50, 86-90 (DGTTT), G418, and D499 contribute to the ATP site. The segment at 528-555 (HEEDNNTGNRSGGGVGGGHHGGMGGMDF) is disordered. Positions 537–555 (RSGGGVGGGHHGGMGGMDF) are enriched in gly residues.

It belongs to the chaperonin (HSP60) family. Forms a cylinder of 14 subunits composed of two heptameric rings stacked back-to-back. Interacts with the co-chaperonin GroES.

Its subcellular location is the cytoplasm. The catalysed reaction is ATP + H2O + a folded polypeptide = ADP + phosphate + an unfolded polypeptide.. Its function is as follows. Together with its co-chaperonin GroES, plays an essential role in assisting protein folding. The GroEL-GroES system forms a nano-cage that allows encapsulation of the non-native substrate proteins and provides a physical environment optimized to promote and accelerate protein folding. The chain is Chaperonin GroEL from Orientia tsutsugamushi (Rickettsia tsutsugamushi).